Here is a 714-residue protein sequence, read N- to C-terminus: Hormonally up-regulated neu tumor-associated kinase (714 aa).

Residues 1–16 show a composition bias toward low complexity; sequence MPAAAGDGLLGEPAAP. The segment at 1–28 is disordered; the sequence is MPAAAGDGLLGEPAAPGGDGGAEDTTRP. A Protein kinase domain is found at 62 to 320; sequence LIGSRKLGEG…IQQALANRWL (259 aa). Residues 68–76 and Lys91 contribute to the ATP site; that span reads LGEGSFAKV. Asp186 acts as the Proton acceptor in catalysis. Positions 624–635 are enriched in basic and acidic residues; the sequence is HEEKNSPPKEEG. 2 disordered regions span residues 624 to 658 and 674 to 714; these read HEEK…NCVK and KRHQ…KGQC. The segment covering 692-703 has biased composition (polar residues); it reads SPLQPTAPSSLS.

It belongs to the protein kinase superfamily. CAMK Ser/Thr protein kinase family. SNF1 subfamily.

The enzyme catalyses L-seryl-[protein] + ATP = O-phospho-L-seryl-[protein] + ADP + H(+). The catalysed reaction is L-threonyl-[protein] + ATP = O-phospho-L-threonyl-[protein] + ADP + H(+). This is Hormonally up-regulated neu tumor-associated kinase (Hunk) from Mus musculus (Mouse).